Here is an 88-residue protein sequence, read N- to C-terminus: Augerpeptide Hhe9a (88 aa).

The N-terminal stretch at 1–21 is a signal peptide; sequence MMTKTGLVLLFAFLLVFPVSS. Positions 22–49 are excised as a propeptide; sequence LPMDAEAGHARLEMDKRDAGNEAWTRLL. Disulfide bonds link Cys-56/Cys-71, Cys-61/Cys-73, and Cys-67/Cys-86.

As to expression, expressed by the venom duct.

It localises to the secreted. This chain is Augerpeptide Hhe9a, found in Hastula hectica (Sea snail).